Here is a 367-residue protein sequence, read N- to C-terminus: tRNA/tmRNA (uracil-C(5))-methyltransferase (367 aa).

The S-adenosyl-L-methionine site is built by Q190, Y218, N223, E239, and D299. C324 acts as the Nucleophile in catalysis. E358 acts as the Proton acceptor in catalysis.

It belongs to the class I-like SAM-binding methyltransferase superfamily. RNA M5U methyltransferase family. TrmA subfamily.

The enzyme catalyses uridine(54) in tRNA + S-adenosyl-L-methionine = 5-methyluridine(54) in tRNA + S-adenosyl-L-homocysteine + H(+). The catalysed reaction is uridine(341) in tmRNA + S-adenosyl-L-methionine = 5-methyluridine(341) in tmRNA + S-adenosyl-L-homocysteine + H(+). In terms of biological role, dual-specificity methyltransferase that catalyzes the formation of 5-methyluridine at position 54 (m5U54) in all tRNAs, and that of position 341 (m5U341) in tmRNA (transfer-mRNA). This is tRNA/tmRNA (uracil-C(5))-methyltransferase from Musicola paradisiaca (strain Ech703) (Dickeya paradisiaca).